The chain runs to 193 residues: Holliday junction branch migration complex subunit RuvA (193 aa).

The interval Met-1 to Leu-64 is domain I. Positions Thr-65–Leu-139 are domain II. A flexible linker region spans residues Leu-139 to Ala-143. The domain III stretch occupies residues Ser-144–Ala-193.

It belongs to the RuvA family. As to quaternary structure, homotetramer. Forms an RuvA(8)-RuvB(12)-Holliday junction (HJ) complex. HJ DNA is sandwiched between 2 RuvA tetramers; dsDNA enters through RuvA and exits via RuvB. An RuvB hexamer assembles on each DNA strand where it exits the tetramer. Each RuvB hexamer is contacted by two RuvA subunits (via domain III) on 2 adjacent RuvB subunits; this complex drives branch migration. In the full resolvosome a probable DNA-RuvA(4)-RuvB(12)-RuvC(2) complex forms which resolves the HJ.

The protein resides in the cytoplasm. In terms of biological role, the RuvA-RuvB-RuvC complex processes Holliday junction (HJ) DNA during genetic recombination and DNA repair, while the RuvA-RuvB complex plays an important role in the rescue of blocked DNA replication forks via replication fork reversal (RFR). RuvA specifically binds to HJ cruciform DNA, conferring on it an open structure. The RuvB hexamer acts as an ATP-dependent pump, pulling dsDNA into and through the RuvAB complex. HJ branch migration allows RuvC to scan DNA until it finds its consensus sequence, where it cleaves and resolves the cruciform DNA. This chain is Holliday junction branch migration complex subunit RuvA, found in Burkholderia cenocepacia (strain ATCC BAA-245 / DSM 16553 / LMG 16656 / NCTC 13227 / J2315 / CF5610) (Burkholderia cepacia (strain J2315)).